Consider the following 157-residue polypeptide: MRTTIHKVITMMKGLIIVLKHAFQTPVTLRYPEEKRILPARSRGRHYLTKWNDGLERCVGCELCAIVCPAQAIYVKPAANEPGHIHSHGERYASDFQINMLRCIFCGYCEEACPTGAIVLSNQYELSAYTREDMIYTKDRLTEKTPGESGRDPSREI.

4Fe-4S ferredoxin-type domains follow at residues 47-78 (YLTKWNDGLERCVGCELCAIVCPAQAIYVKPA) and 94-123 (SDFQINMLRCIFCGYCEEACPTGAIVLSNQ). [4Fe-4S] cluster contacts are provided by cysteine 58, cysteine 61, cysteine 64, cysteine 68, cysteine 103, cysteine 106, cysteine 109, and cysteine 113.

Belongs to the complex I 23 kDa subunit family. NDH-1 is composed of 14 different subunits. Subunits NuoA, H, J, K, L, M, N constitute the membrane sector of the complex. It depends on [4Fe-4S] cluster as a cofactor.

It localises to the cell inner membrane. It catalyses the reaction a quinone + NADH + 5 H(+)(in) = a quinol + NAD(+) + 4 H(+)(out). In terms of biological role, NDH-1 shuttles electrons from NADH, via FMN and iron-sulfur (Fe-S) centers, to quinones in the respiratory chain. The immediate electron acceptor for the enzyme in this species is believed to be ubiquinone. Couples the redox reaction to proton translocation (for every two electrons transferred, four hydrogen ions are translocated across the cytoplasmic membrane), and thus conserves the redox energy in a proton gradient. This Protochlamydia amoebophila (strain UWE25) protein is NADH-quinone oxidoreductase subunit I (nuoI).